The following is a 164-amino-acid chain: Thiol peroxidase (164 aa).

A Thioredoxin domain is found at 17–162 (IKVGDTFPDF…YDEVLQAAQA (146 aa)). Catalysis depends on C58, which acts as the Cysteine sulfenic acid (-SOH) intermediate. Residues C58 and C92 are joined by a disulfide bond.

The protein belongs to the peroxiredoxin family. Tpx subfamily. In terms of assembly, homodimer.

It catalyses the reaction a hydroperoxide + [thioredoxin]-dithiol = an alcohol + [thioredoxin]-disulfide + H2O. In terms of biological role, thiol-specific peroxidase that catalyzes the reduction of hydrogen peroxide and organic hydroperoxides to water and alcohols, respectively. Plays a role in cell protection against oxidative stress by detoxifying peroxides. The protein is Thiol peroxidase of Clostridium acetobutylicum (strain ATCC 824 / DSM 792 / JCM 1419 / IAM 19013 / LMG 5710 / NBRC 13948 / NRRL B-527 / VKM B-1787 / 2291 / W).